We begin with the raw amino-acid sequence, 669 residues long: Dymeclin (669 aa).

The N-myristoyl glycine moiety is linked to residue G2.

It belongs to the dymeclin family. As to quaternary structure, interacts with GOLM1 and PPIB. In terms of processing, myristoylated in vitro; myristoylation is not essential for protein targeting to Golgi compartment.

It is found in the cytoplasm. Its subcellular location is the golgi apparatus. The protein resides in the membrane. Functionally, necessary for correct organization of Golgi apparatus. Involved in bone development. In Mus musculus (Mouse), this protein is Dymeclin (Dym).